Reading from the N-terminus, the 675-residue chain is Methionine--tRNA ligase (675 aa).

The 'HIGH' region motif lies at 15–25; it reads PYANGSIHLGH. Zn(2+) contacts are provided by Cys-146, Cys-149, Cys-159, and Cys-162. The 'KMSKS' region motif lies at 332–336; the sequence is KMSKS. Lys-335 contributes to the ATP binding site. One can recognise a tRNA-binding domain in the interval 573–675; that stretch reads DFAKVDMRIA…SGAQPGMQVK (103 aa).

This sequence belongs to the class-I aminoacyl-tRNA synthetase family. MetG type 1 subfamily. In terms of assembly, homodimer. The cofactor is Zn(2+).

Its subcellular location is the cytoplasm. The catalysed reaction is tRNA(Met) + L-methionine + ATP = L-methionyl-tRNA(Met) + AMP + diphosphate. In terms of biological role, is required not only for elongation of protein synthesis but also for the initiation of all mRNA translation through initiator tRNA(fMet) aminoacylation. In Yersinia pseudotuberculosis serotype O:3 (strain YPIII), this protein is Methionine--tRNA ligase.